The primary structure comprises 102 residues: MTTSSSSEPSTMATLFPNFRDQEVQSAVKNLLTYSLVILIVPLASMFLLKQFFFEGLLGVSANDALTYSAIIAVVLVHVVLGIWLFAATKQEDRKKRENKQD.

At 1 to 33 the chain is on the cytoplasmic side; the sequence is MTTSSSSEPSTMATLFPNFRDQEVQSAVKNLLT. The helical transmembrane segment at 34–54 threads the bilayer; that stretch reads YSLVILIVPLASMFLLKQFFF. Topologically, residues 55 to 67 are lumenal; sequence EGLLGVSANDALT. A helical transmembrane segment spans residues 68–88; the sequence is YSAIIAVVLVHVVLGIWLFAA. Topologically, residues 89–102 are cytoplasmic; it reads TKQEDRKKRENKQD.

The protein belongs to the VMA21 family.

It is found in the endoplasmic reticulum membrane. It localises to the endoplasmic reticulum-Golgi intermediate compartment membrane. The protein resides in the cytoplasmic vesicle. Its subcellular location is the COPII-coated vesicle membrane. Required for the assembly of the V0 complex of the vacuolar ATPase (V-ATPase) in the endoplasmic reticulum. In Caenorhabditis elegans, this protein is Vacuolar ATPase assembly integral membrane protein VMA21 homolog.